A 490-amino-acid chain; its full sequence is GTPase Der (490 aa).

2 consecutive EngA-type G domains span residues M1–V165 and L227–T400. GTP-binding positions include G7–S14, D54–V58, N117–D120, G233–S240, D280–L284, and N345–D348. The 85-residue stretch at T401 to P485 folds into the KH-like domain.

Belongs to the TRAFAC class TrmE-Era-EngA-EngB-Septin-like GTPase superfamily. EngA (Der) GTPase family. In terms of assembly, associates with the 50S ribosomal subunit.

GTPase that plays an essential role in the late steps of ribosome biogenesis. The polypeptide is GTPase Der (Chlamydia trachomatis serovar L2b (strain UCH-1/proctitis)).